Here is a 153-residue protein sequence, read N- to C-terminus: Protein E6 (153 aa).

2 zinc fingers span residues 33–69 and 106–142; these read CVYCKKELSSSEVYNFACKDLRLVYREDSPYAVCNFC and CYRCQQPLTPEEKQLHCEYKKRFHRISRTWTGLCLQC. Positions 151–153 match the PDZ-binding domain motif; it reads TAV.

Belongs to the papillomaviridae E6 protein family. In terms of assembly, forms homodimers. Interacts with ubiquitin-protein ligase UBE3A/E6-AP and thus forms a complex with human TP53. Interacts with human NFX1 and MAGI3. Interacts with human IRF3; this interaction inhibits the establishment of antiviral state. Interacts with human TYK2; this interaction inhibits JAK-STAT activation by interferon alpha. Interacts with host DLG1; this interaction leads to the proteasomal degradation of DLG1.

The protein localises to the host cytoplasm. The protein resides in the host nucleus. Functionally, plays a major role in the induction and maintenance of cellular transformation. Acts mainly as an oncoprotein by stimulating the destruction of many host cell key regulatory proteins. E6 associates with host UBE3A/E6-AP ubiquitin-protein ligase, and inactivates tumor suppressors TP53 and TP73 by targeting them to the 26S proteasome for degradation. In turn, DNA damage and chromosomal instabilities increase and lead to cell proliferation and cancer development. The complex E6/E6AP targets several other substrates to degradation via the proteasome including host DLG1 or NFX1, a repressor of human telomerase reverse transcriptase (hTERT). The resulting increased expression of hTERT prevents the shortening of telomere length leading to cell immortalization. Other cellular targets including BAK1, Fas-associated death domain-containing protein (FADD) and procaspase 8, are degraded by E6/E6AP causing inhibition of apoptosis. E6 also inhibits immune response by interacting with host IRF3 and TYK2. These interactions prevent IRF3 transcriptional activities and inhibit TYK2-mediated JAK-STAT activation by interferon alpha resulting in inhibition of the interferon signaling pathway. The chain is Protein E6 from Homo sapiens (Human).